Consider the following 334-residue polypeptide: Mucin-15 (334 aa).

Positions 1-23 (MLALAKILLISTLFYSLLSGSHG) are cleaved as a signal peptide. Residues 24 to 236 (KENQDINTTQ…SDPQKENRNT (213 aa)) lie on the Extracellular side of the membrane. Asn30, Asn61, Asn79, Asn90, Asn148, Asn155, Asn163, Asn218, and Asn225 each carry an N-linked (GlcNAc...) asparagine glycan. Residues 64 to 104 (TSNLKASHSPPLNLPNNSHGITDFSSNSSAEHSLGSLKPTS) are disordered. Over residues 77 to 94 (LPNNSHGITDFSSNSSAE) the composition is skewed to polar residues. Residues 237-257 (GIVFGAILGAILGVSLLTLVG) traverse the membrane as a helical segment. At 258 to 334 (YLLCGKRKTD…DDIPPLRTSV (77 aa)) the chain is on the cytoplasmic side. The tract at residues 304-334 (PTLNDSAMPESEENARDGIPMDDIPPLRTSV) is disordered.

In terms of processing, highly glycosylated (N- and O-linked carbohydrates). Expressed in spleen, thymus, prostate, testis, ovary, small intestine, colon, peripheral blood leukocyte, bone marrow, lymph node and lung.

It is found in the cell membrane. The protein localises to the secreted. In terms of biological role, may play a role in the cell adhesion to the extracellular matrix. In Homo sapiens (Human), this protein is Mucin-15 (MUC15).